We begin with the raw amino-acid sequence, 276 residues long: NH(3)-dependent NAD(+) synthetase (276 aa).

43–50 (GISGGVDS) contacts ATP. Position 49 (D49) interacts with Mg(2+). R146 lines the deamido-NAD(+) pocket. T166 lines the ATP pocket. Residue E171 participates in Mg(2+) binding. K179 and D186 together coordinate deamido-NAD(+). 2 residues coordinate ATP: K195 and T217. Position 266–267 (266–267 (HK)) interacts with deamido-NAD(+).

It belongs to the NAD synthetase family. Homodimer.

It catalyses the reaction deamido-NAD(+) + NH4(+) + ATP = AMP + diphosphate + NAD(+) + H(+). Its pathway is cofactor biosynthesis; NAD(+) biosynthesis; NAD(+) from deamido-NAD(+) (ammonia route): step 1/1. Catalyzes the ATP-dependent amidation of deamido-NAD to form NAD. Uses ammonia as a nitrogen source. This is NH(3)-dependent NAD(+) synthetase from Aliivibrio salmonicida (strain LFI1238) (Vibrio salmonicida (strain LFI1238)).